Here is a 489-residue protein sequence, read N- to C-terminus: Rhamnulokinase (489 aa).

Alanine 13–arginine 17 is an ATP binding site. Cysteine 68 and cysteine 222 form a disulfide bridge. Residues glycine 83 and histidine 236–threonine 238 each bind substrate. The Proton acceptor role is filled by aspartate 237. Position 259 (threonine 259) interacts with ATP. Asparagine 296 is a binding site for substrate. Residue glutamine 304 coordinates ATP. An intrachain disulfide couples cysteine 353 to cysteine 370. Glycine 402 contacts ATP. A disulfide bridge connects residues cysteine 413 and cysteine 417.

The protein belongs to the rhamnulokinase family. Mg(2+) is required as a cofactor.

The catalysed reaction is L-rhamnulose + ATP = L-rhamnulose 1-phosphate + ADP + H(+). The protein operates within carbohydrate degradation; L-rhamnose degradation; glycerone phosphate from L-rhamnose: step 2/3. Involved in the catabolism of L-rhamnose (6-deoxy-L-mannose). Catalyzes the transfer of the gamma-phosphate group from ATP to the 1-hydroxyl group of L-rhamnulose to yield L-rhamnulose 1-phosphate. In Salmonella typhi, this protein is Rhamnulokinase.